The sequence spans 264 residues: Ferric siderophore reductase (264 aa).

The FAD-binding FR-type domain occupies 9 to 127 (SPTRLTYISD…PGPLKMNRFD (119 aa)). 12 residues coordinate FAD: Arg-73, Ser-74, Thr-76, Asp-90, Val-92, His-96, Ala-100, Thr-101, Lys-247, Asn-249, Thr-250, and Ala-252.

Belongs to the SIP oxidoreductase family. It depends on FAD as a cofactor.

Its function is as follows. Ferric-siderophore reductase involved in iron removal from the siderophores after their transport into the cell. Catalyzes the reduction of the ferric iron bound to the hydroxamate siderophores produced by Shewanella to ferrous iron. Can use a ferredoxin as electron donor. Despite the clear evidence for the interaction with NAD(P)H, no direct reduction of the enzyme by these compounds is observed, nor consumption of NAD(P)H, suggesting that NADH and NADPH are not the physiological electron donors. The polypeptide is Ferric siderophore reductase (Shewanella frigidimarina (strain NCIMB 400)).